We begin with the raw amino-acid sequence, 485 residues long: Glycogen synthase (485 aa).

Residue Lys-15 participates in ADP-alpha-D-glucose binding.

Belongs to the glycosyltransferase 1 family. Bacterial/plant glycogen synthase subfamily.

It carries out the reaction [(1-&gt;4)-alpha-D-glucosyl](n) + ADP-alpha-D-glucose = [(1-&gt;4)-alpha-D-glucosyl](n+1) + ADP + H(+). It participates in glycan biosynthesis; glycogen biosynthesis. Synthesizes alpha-1,4-glucan chains using ADP-glucose. This Thermosipho africanus (strain TCF52B) protein is Glycogen synthase.